Reading from the N-terminus, the 967-residue chain is Nonsense-mediated mRNA decay factor SMG8 (967 aa).

Positions L627–S702 are disordered. Acidic residues predominate over residues N628–S639. Positions R643–S666 are enriched in low complexity. Residues A686–S702 are compositionally biased toward polar residues.

Belongs to the SMG8 family.

Involved in nonsense-mediated decay (NMD) of mRNAs containing premature stop codons. Probable component of kinase complex containing nonC and recruited to stalled ribosomes. In Drosophila mojavensis (Fruit fly), this protein is Nonsense-mediated mRNA decay factor SMG8.